The following is a 210-amino-acid chain: Redox-sensing transcriptional repressor Rex (210 aa).

Residues 17–56 constitute a DNA-binding region (H-T-H motif); sequence KYHRYLNELMKNDVDRISSKELGEKIGFTASQIRQDLNCF. An NAD(+)-binding site is contributed by 91-96; it reads GAGNIG.

The protein belongs to the transcriptional regulatory Rex family. Homodimer.

Its subcellular location is the cytoplasm. In terms of biological role, modulates transcription in response to changes in cellular NADH/NAD(+) redox state. This Clostridium botulinum (strain Eklund 17B / Type B) protein is Redox-sensing transcriptional repressor Rex.